The chain runs to 303 residues: Flavin-dependent thymidylate synthase (303 aa).

Positions 1 to 21 are disordered; the sequence is MALTSEQRAEIEAQRSEPQLT. The ThyX domain maps to 43-256; that stretch reads GFLRVVDYMG…PATAAAFEEY (214 aa). FAD contacts are provided by residues Thr-89, 112-114, and Glu-120; that span reads RHR. DUMP contacts are provided by residues 109-112, 120-124, and Arg-195; these read QWIR and EYSAR. Positions 112–122 match the ThyX motif motif; the sequence is RHRMASVNEYS. FAD is bound by residues 211-213 and His-217; that span reads DLH. A dUMP-binding site is contributed by Arg-222. Residue Arg-222 is the Involved in ionization of N3 of dUMP, leading to its activation of the active site.

The protein belongs to the thymidylate synthase ThyX family. Homotetramer. Requires FAD as cofactor.

The catalysed reaction is dUMP + (6R)-5,10-methylene-5,6,7,8-tetrahydrofolate + NADPH + H(+) = dTMP + (6S)-5,6,7,8-tetrahydrofolate + NADP(+). It functions in the pathway pyrimidine metabolism; dTTP biosynthesis. In terms of biological role, catalyzes the reductive methylation of 2'-deoxyuridine-5'-monophosphate (dUMP) to 2'-deoxythymidine-5'-monophosphate (dTMP) while utilizing 5,10-methylenetetrahydrofolate (mTHF) as the methyl donor, and NADPH and FADH(2) as the reductant. The protein is Flavin-dependent thymidylate synthase of Gluconobacter oxydans (strain 621H) (Gluconobacter suboxydans).